A 220-amino-acid chain; its full sequence is Heptaprenyl diphosphate synthase component 1 (220 aa).

In terms of assembly, heterodimer of component I and II.

It carries out the reaction 4 isopentenyl diphosphate + (2E,6E)-farnesyl diphosphate = all-trans-heptaprenyl diphosphate + 4 diphosphate. Supplies heptaprenyl diphosphate, the precursor for the side chain of the isoprenoid quinone menaquinone-7 (MQ-7). The chain is Heptaprenyl diphosphate synthase component 1 (hepS) from Geobacillus stearothermophilus (Bacillus stearothermophilus).